We begin with the raw amino-acid sequence, 381 residues long: uncharacterized protein (381 aa).

A run of 2 helical transmembrane segments spans residues 22 to 42 (GVLL…YLTA) and 246 to 266 (LIPE…LLVA).

The protein resides in the cell membrane. This is an uncharacterized protein from Mycobacterium tuberculosis (strain ATCC 25618 / H37Rv).